The chain runs to 563 residues: Ribulokinase (563 aa).

Belongs to the ribulokinase family.

It carries out the reaction D-ribulose + ATP = D-ribulose 5-phosphate + ADP + H(+). The enzyme catalyses L-ribulose + ATP = L-ribulose 5-phosphate + ADP + H(+). The protein operates within carbohydrate degradation; L-arabinose degradation via L-ribulose; D-xylulose 5-phosphate from L-arabinose (bacterial route): step 2/3. This is Ribulokinase from Halalkalibacterium halodurans (strain ATCC BAA-125 / DSM 18197 / FERM 7344 / JCM 9153 / C-125) (Bacillus halodurans).